A 178-amino-acid polypeptide reads, in one-letter code: ATP synthase subunit delta (178 aa).

This sequence belongs to the ATPase delta chain family. As to quaternary structure, F-type ATPases have 2 components, F(1) - the catalytic core - and F(0) - the membrane proton channel. F(1) has five subunits: alpha(3), beta(3), gamma(1), delta(1), epsilon(1). F(0) has three main subunits: a(1), b(2) and c(10-14). The alpha and beta chains form an alternating ring which encloses part of the gamma chain. F(1) is attached to F(0) by a central stalk formed by the gamma and epsilon chains, while a peripheral stalk is formed by the delta and b chains.

It is found in the cell inner membrane. Its function is as follows. F(1)F(0) ATP synthase produces ATP from ADP in the presence of a proton or sodium gradient. F-type ATPases consist of two structural domains, F(1) containing the extramembraneous catalytic core and F(0) containing the membrane proton channel, linked together by a central stalk and a peripheral stalk. During catalysis, ATP synthesis in the catalytic domain of F(1) is coupled via a rotary mechanism of the central stalk subunits to proton translocation. Functionally, this protein is part of the stalk that links CF(0) to CF(1). It either transmits conformational changes from CF(0) to CF(1) or is implicated in proton conduction. This is ATP synthase subunit delta from Azotobacter vinelandii (strain DJ / ATCC BAA-1303).